Consider the following 197-residue polypeptide: UPF0314 protein NGR_c32320 (197 aa).

3 consecutive transmembrane segments (helical) span residues W16–M36, W66–L86, and L152–I172.

It belongs to the UPF0314 family.

The protein localises to the cell membrane. The sequence is that of UPF0314 protein NGR_c32320 from Sinorhizobium fredii (strain NBRC 101917 / NGR234).